The primary structure comprises 154 residues: MTHCCSPCCQPTCCRTTCCRTTCWKPTTVTTCSSTPCCQPSCCVSSCCQPCCRPACCQNTCCRTTCCQPTCLSSCCGQTSCGSSCGQSSSCAPVYCRRTCYYPTTVCLPGCLNQSCGSSCCQPCCRPACCETTCCRTTCFQPTCVSSCCQPSCC.

14 consecutive repeat copies span residues 8-12 (CCQPT), 13-17 (CCRTT), 18-22 (CCRTT), 37-41 (CCQPS), 42-46 (CCVSS), 51-55 (CCRPA), 56-60 (CCQNT), 61-65 (CCRTT), 66-70 (CCQPT), 75-79 (CCGQT), 124-128 (CCRPA), 129-133 (CCETT), 134-137 (CCRT), and 148-152 (CCQPS). A 14 X 5 AA repeats of C-C-[RQVGE]-[SPSTNQ]-[TASL] region spans residues 8–152 (CCQPTCCRTT…TCVSSCCQPS (145 aa)).

It belongs to the KRTAP type 9 family. In terms of assembly, interacts with hair keratins.

Functionally, in the hair cortex, hair keratin intermediate filaments are embedded in an interfilamentous matrix, consisting of hair keratin-associated proteins (KRTAP), which are essential for the formation of a rigid and resistant hair shaft through their extensive disulfide bond cross-linking with abundant cysteine residues of hair keratins. The matrix proteins include the high-sulfur and high-glycine-tyrosine keratins. The polypeptide is Keratin-associated protein 9-9 (KRTAP9-9) (Homo sapiens (Human)).